The following is a 443-amino-acid chain: Glucose-6-phosphate isomerase (443 aa).

The Proton donor role is filled by E285. Active-site residues include H306 and K420.

It belongs to the GPI family.

Its subcellular location is the cytoplasm. It carries out the reaction alpha-D-glucose 6-phosphate = beta-D-fructose 6-phosphate. It functions in the pathway carbohydrate biosynthesis; gluconeogenesis. The protein operates within carbohydrate degradation; glycolysis; D-glyceraldehyde 3-phosphate and glycerone phosphate from D-glucose: step 2/4. Its function is as follows. Catalyzes the reversible isomerization of glucose-6-phosphate to fructose-6-phosphate. This is Glucose-6-phosphate isomerase from Staphylococcus saprophyticus subsp. saprophyticus (strain ATCC 15305 / DSM 20229 / NCIMB 8711 / NCTC 7292 / S-41).